A 644-amino-acid chain; its full sequence is Exoribonuclease 2 (644 aa).

Positions 189–516 (REDLTALDFV…NHRLLKAVIK (328 aa)) constitute an RNB domain. The 83-residue stretch at 561 to 643 (DTRFAAEIVD…ETRSIIARPV (83 aa)) folds into the S1 motif domain.

This sequence belongs to the RNR ribonuclease family. RNase II subfamily.

It is found in the cytoplasm. It carries out the reaction Exonucleolytic cleavage in the 3'- to 5'-direction to yield nucleoside 5'-phosphates.. In terms of biological role, involved in mRNA degradation. Hydrolyzes single-stranded polyribonucleotides processively in the 3' to 5' direction. The sequence is that of Exoribonuclease 2 from Shigella dysenteriae serotype 1 (strain Sd197).